The sequence spans 314 residues: Thioredoxin reductase aclD (314 aa).

Residues 13–16, 35–40, His47, and Ala112 each bind FAD; these read GGPA and DSKSYR. Cys136 and Cys139 are joined by a disulfide. Residues Asp281 and 288-289 contribute to the FAD site; that span reads AA.

This sequence belongs to the class-II pyridine nucleotide-disulfide oxidoreductase family. As to quaternary structure, homodimer. FAD serves as cofactor.

The protein operates within mycotoxin biosynthesis. Thioredoxin reductase; part of the gene cluster that mediates the biosynthesis of aspirochlorine (or antibiotic A30641), an unusual halogenated spiro compound with distinctive antifungal properties due to selective inhibition of protein biosynthesis, and which is also active against bacteria, viruses, and murine tumor cells. The non-ribosomal peptide synthetase (NRPS) aclP is responsible the formation of the diketopiperazine (DKP) core from the condensation of 2 phenylalanine residues. One Phe residue is tailored into chlorotyrosine by hydroxylation and chlorination, whereas the second Phe undergoes an unprecedented C-C bond cleavage to be converted into glycine. After formation of the DKP, sulfur is incorporated into the DKP by conjugation with glutathione by aclG, followed by its stepwise degradation to the thiol by aclI, aclJ and aclK, and the dithiol oxidation by aclT. In addition, oxygenases (aclB, aclC, aclL and aclO) and O-methyltransferases (aclM and aclU) act as tailoring enzymes to produce the intermediate dechloroaspirochlorine. Ultimately, chlorination of dechloroaspirochlorine by the halogenase aclH is the last step in the aspirochlorine pathway. This chain is Thioredoxin reductase aclD, found in Aspergillus oryzae (strain ATCC 42149 / RIB 40) (Yellow koji mold).